A 339-amino-acid polypeptide reads, in one-letter code: Putative P2Y purinoceptor 10 (339 aa).

At Met1–Thr39 the chain is on the extracellular side. 2 N-linked (GlcNAc...) asparagine glycosylation sites follow: Asn16 and Asn26. The chain crosses the membrane as a helical span at residues Thr40–Cys60. The Cytoplasmic segment spans residues Arg61–Lys68. A helical membrane pass occupies residues Ala69–Leu89. Residues Arg90–Arg103 lie on the Extracellular side of the membrane. A helical transmembrane segment spans residues Ala104–Leu124. A disulfide bond links Cys106 and Cys181. Topologically, residues Thr125–Asp149 are cytoplasmic. Residues Val150 to Leu170 form a helical membrane-spanning segment. Over Arg171–Val193 the chain is Extracellular. Asn178 carries an N-linked (GlcNAc...) asparagine glycan. Residues Ala194–Ile214 form a helical membrane-spanning segment. The Cytoplasmic segment spans residues Ala215 to Met244. Residues Val245–Phe265 traverse the membrane as a helical segment. Residues Tyr266–Pro288 lie on the Extracellular side of the membrane. The chain crosses the membrane as a helical span at residues Phe289 to Ala309. Residues Ser310–Gly339 are Cytoplasmic-facing.

Belongs to the G-protein coupled receptor 1 family. Weakly expressed in blood leukocytes.

It is found in the cell membrane. Its function is as follows. Putative receptor for purines coupled to G-proteins. This Homo sapiens (Human) protein is Putative P2Y purinoceptor 10 (P2RY10).